A 622-amino-acid polypeptide reads, in one-letter code: Protein FAM234B (622 aa).

A disordered region spans residues 1-68; the sequence is MATVLSRALK…EPDSDAEVAE (68 aa). Serine 16 carries the post-translational modification Phosphoserine. Threonine 26 bears the Phosphothreonine mark. Phosphoserine occurs at positions 30, 33, and 62. The helical transmembrane segment at 104–124 threads the bilayer; sequence TSVFLLTLGISMILVLLCAFL.

This sequence belongs to the FAM234 family.

Its subcellular location is the membrane. It localises to the golgi outpost. The protein resides in the cytoplasm. The protein localises to the cytoskeleton. It is found in the microtubule organizing center. The chain is Protein FAM234B from Homo sapiens (Human).